A 248-amino-acid chain; its full sequence is MAELDPFGAPAGAPGGPALGNGVAGAGEEDPAAAFLAQQESEIAGIENDEAFAILDGGAPGPQAHGEPPGGPDAVDGVMNGEYYQESNGPTDSYAAISEVDRLQSEPESIRKWREEQTERLEALDANSRKQEAEWKEKAVKELEEWYARQDEQLQKTKASNRVADEAFYKQPFADVIGYVTNINHPCYSLEQAAEEAFVNDIDESSPGTEWERVARLCDFNPKSSKQAKDVSRMRSVLISLKQAPLVH.

A disordered region spans residues 1 to 93 (MAELDPFGAP…YQESNGPTDS (93 aa)). The segment covering 13 to 25 (APGGPALGNGVAG) has biased composition (gly residues). Positions 100–162 (VDRLQSEPES…QLQKTKASNR (63 aa)) are involved in binding clathrin heavy chain. Phosphoserine is present on residues Ser-105 and Ser-206. Residue Lys-223 is modified to N6-acetyllysine. Phosphoserine is present on Ser-236. An N6-acetyllysine modification is found at Lys-242.

Belongs to the clathrin light chain family. As to quaternary structure, clathrin coats are formed from molecules containing 3 heavy chains and 3 light chains. Interacts with CALY; the interaction stimulates clathrin self-assembly and clathrin-mediated endocytosis. Interacts with CKAP5 and TACC3 forming the TACC3/ch-TOG/clathrin complex located at spindle inter-microtubules bridges; the complex implicates clathrin triskelions.

The protein resides in the cytoplasmic vesicle membrane. Its subcellular location is the membrane. The protein localises to the coated pit. It localises to the cytoplasm. It is found in the cytoskeleton. The protein resides in the spindle. Its function is as follows. Clathrin is the major protein of the polyhedral coat of coated pits and vesicles. Acts as a component of the TACC3/ch-TOG/clathrin complex proposed to contribute to stabilization of kinetochore fibers of the mitotic spindle by acting as inter-microtubule bridge. The chain is Clathrin light chain A (Clta) from Rattus norvegicus (Rat).